The primary structure comprises 230 residues: uncharacterized protein (230 aa).

Residues Glu-74, Glu-76, and Asp-105 each contribute to the a divalent metal cation site.

Belongs to the FAH family.

This is an uncharacterized protein from Pyrococcus horikoshii (strain ATCC 700860 / DSM 12428 / JCM 9974 / NBRC 100139 / OT-3).